Consider the following 187-residue polypeptide: UPF0340 protein SP70585_0722 (187 aa).

The protein belongs to the UPF0340 family.

This chain is UPF0340 protein SP70585_0722, found in Streptococcus pneumoniae (strain 70585).